The chain runs to 304 residues: Ornithine carbamoyltransferase (304 aa).

Carbamoyl phosphate-binding positions include 47–50, arginine 98, and 125–128; these read STRT and HPCQ. L-ornithine contacts are provided by residues asparagine 156, aspartate 221, and 225-226; that span reads SM. Carbamoyl phosphate is bound by residues 262–263 and arginine 290; that span reads CL.

This sequence belongs to the aspartate/ornithine carbamoyltransferase superfamily. OTCase family.

Its subcellular location is the cytoplasm. The catalysed reaction is carbamoyl phosphate + L-ornithine = L-citrulline + phosphate + H(+). It functions in the pathway amino-acid biosynthesis; L-arginine biosynthesis; L-arginine from L-ornithine and carbamoyl phosphate: step 1/3. In terms of biological role, reversibly catalyzes the transfer of the carbamoyl group from carbamoyl phosphate (CP) to the N(epsilon) atom of ornithine (ORN) to produce L-citrulline. The protein is Ornithine carbamoyltransferase of Methanococcus maripaludis (strain C5 / ATCC BAA-1333).